We begin with the raw amino-acid sequence, 372 residues long: N-acetylneuraminate epimerase 1 (372 aa).

The N-terminal stretch at 1-25 is a signal peptide; that stretch reads MITMKVKNFIYLPFCLFIGTSVAGA. 7 Kelch repeats span residues 44 to 88, 90 to 141, 143 to 177, 178 to 223, 226 to 269, 291 to 340, and 342 to 371; these read KIYI…TIID, KIYV…FIHN, HAVS…KVNR, DYFS…IFAE, IYIL…VSGA, EKYS…PWQG, and MLIL…IKIV. Residue Glu-232 is the Proton acceptor of the active site.

Belongs to the NanM family. Homodimer.

The protein localises to the periplasm. It carries out the reaction N-acetyl-alpha-neuraminate = N-acetyl-beta-neuraminate. Its function is as follows. Converts alpha-N-acetylneuranimic acid (Neu5Ac) to the beta-anomer, accelerating the equilibrium between the alpha- and beta-anomers. Probably facilitates sialidase-negative bacteria to compete successfully for limited amounts of extracellular Neu5Ac, which is likely taken up in the beta-anomer. In addition, the rapid removal of sialic acid from solution might be advantageous to the bacterium to damp down host responses. The protein is N-acetylneuraminate epimerase 1 of Escherichia coli O6:H1 (strain CFT073 / ATCC 700928 / UPEC).